Reading from the N-terminus, the 251-residue chain is Small ribosomal subunit protein uS2 (251 aa).

N-acetylserine is present on Ser-2. Positions 209–251 (EIEQQTAEEAAQEAGEEEAKEEVTEEQTEAAEWAQENADNVEW) are disordered. The segment covering 218–237 (AAQEAGEEEAKEEVTEEQTE) has biased composition (acidic residues). A compositionally biased stretch (low complexity) spans 238 to 251 (AAEWAQENADNVEW).

It belongs to the universal ribosomal protein uS2 family. Component of the small ribosomal subunit. Mature ribosomes consist of a small (40S) and a large (60S) subunit. The 40S subunit contains about 33 different proteins and 1 molecule of RNA (18S). The 60S subunit contains about 49 different proteins and 3 molecules of RNA (25S, 5.8S and 5S). Interacts with RPS21.

The protein localises to the cytoplasm. In terms of biological role, required for the assembly and/or stability of the 40S ribosomal subunit. Required for the processing of the 20S rRNA-precursor to mature 18S rRNA in a late step of the maturation of 40S ribosomal subunits. The chain is Small ribosomal subunit protein uS2 from Candida glabrata (strain ATCC 2001 / BCRC 20586 / JCM 3761 / NBRC 0622 / NRRL Y-65 / CBS 138) (Yeast).